A 528-amino-acid chain; its full sequence is GMP synthase [glutamine-hydrolyzing] (528 aa).

A Glutamine amidotransferase type-1 domain is found at 13-204 (SILILDFGSQ…VYSISKCKAD (192 aa)). C90 serves as the catalytic Nucleophile. Active-site residues include H178 and E180. One can recognise a GMPS ATP-PPase domain in the interval 205 to 403 (WNTETFLEET…LGLPDEIIKR (199 aa)). Residue 232–238 (SGGVDSS) coordinates ATP.

As to quaternary structure, homodimer.

It catalyses the reaction XMP + L-glutamine + ATP + H2O = GMP + L-glutamate + AMP + diphosphate + 2 H(+). It participates in purine metabolism; GMP biosynthesis; GMP from XMP (L-Gln route): step 1/1. Its function is as follows. Catalyzes the synthesis of GMP from XMP. In Prochlorococcus marinus (strain MIT 9515), this protein is GMP synthase [glutamine-hydrolyzing].